Consider the following 371-residue polypeptide: MVNEKRLLEEFLELVQIDSETKHEAEICKVLKRKFSDLGVDVKEDDTMDITGHGAGNLICTLKGTKQTDTIYFTSHMDTVVPGNGVKPVVENGYVKTDGTTILGADDKAGLAAMFEAIKVLKEENIEHGTIEFIITVGEESGLIGAKALDRSMITASYGYALDSDGKVGNIIVAAPTQAKVRAAIFGKTAHAGVEPEKGISAITIASKAISKMPLGRIDEETTANIGRFEGGTQTNIVCDEVHILAEARSLVPEKMEAQVQKMKAAFEEAAADMGGRAEVEIEVMYPGFKYQDGDQVVEIAKKAAAKIGRPSELQTSGGGSDANVIAGHGIPTVNLAVGYEQIHTKNEKMPIEELVKTAEMVVAIIEEAAK.

Histidine 76 contributes to the Zn(2+) binding site. Aspartate 78 is an active-site residue. Aspartate 106 contributes to the Zn(2+) binding site. The Proton acceptor role is filled by glutamate 139. Zn(2+)-binding residues include glutamate 140, aspartate 163, and histidine 344.

This sequence belongs to the peptidase M20A family. The cofactor is Zn(2+).

Its function is as follows. Could be a peptidase. This is an uncharacterized protein from Bacillus subtilis (strain 168).